Consider the following 100-residue polypeptide: Small ribosomal subunit protein uS14c (100 aa).

It belongs to the universal ribosomal protein uS14 family. Part of the 30S ribosomal subunit.

It localises to the plastid. The protein resides in the chloroplast. Functionally, binds 16S rRNA, required for the assembly of 30S particles. In Illicium oligandrum (Star anise), this protein is Small ribosomal subunit protein uS14c.